The sequence spans 275 residues: Notch homolog 2 N-terminal-like protein B (275 aa).

Residues 1-25 (MPALRPALLWALLALWLCCATPAHA) form the signal peptide. 4 consecutive EGF-like domains span residues 26–63 (LQCR…EYCQ), 64–102 (HRDP…EDCQ), 105–143 (TSHP…KECQ), and 144–180 (WTDA…QKCE). 17 disulfides stabilise this stretch: cysteine 28-cysteine 41, cysteine 35-cysteine 51, cysteine 53-cysteine 62, cysteine 68-cysteine 79, cysteine 73-cysteine 90, cysteine 92-cysteine 101, cysteine 109-cysteine 121, cysteine 115-cysteine 131, cysteine 133-cysteine 142, cysteine 148-cysteine 159, cysteine 153-cysteine 168, cysteine 170-cysteine 179, cysteine 186-cysteine 198, cysteine 192-cysteine 207, cysteine 209-cysteine 218, cysteine 225-cysteine 236, and cysteine 230-cysteine 246. Asparagine 46 is a glycosylation site (N-linked (GlcNAc...) asparagine). N-linked (GlcNAc...) asparagine glycosylation is present at asparagine 155. The region spanning 182 to 219 (DVNECDIPGHCQHGGICLNLPGSYQCQCLQGFTGQYCD) is the EGF-like 5; calcium-binding domain. Residues 221-258 (LYVPCAPSPCVNGGTCRQTGDFTFECNCLPETVRRGTE) enclose the EGF-like 6 domain.

This sequence belongs to the NOTCH family. Interacts with NOTCH2. Interacts with DLL1; the interaction is direct. In terms of tissue distribution, expressed in radial glia neural stem cells during cortical development.

The protein localises to the secreted. Human-specific protein that promotes neural progenitor proliferation and evolutionary expansion of the brain neocortex by regulating the Notch signaling pathway. Able to promote neural progenitor self-renewal, possibly by down-regulating neuronal differentiation genes, thereby delaying the differentiation of neuronal progenitors and leading to an overall final increase in neuronal production. Acts by enhancing the Notch signaling pathway via two different mechanisms that probably work in parallel to reach the same effect. Enhances Notch signaling pathway in a non-cell-autonomous manner via direct interaction with NOTCH2. Also promotes Notch signaling pathway in a cell-autonomous manner through inhibition of cis DLL1-NOTCH2 interactions, which promotes neuronal differentiation. The protein is Notch homolog 2 N-terminal-like protein B of Homo sapiens (Human).